Here is a 486-residue protein sequence, read N- to C-terminus: Cardiolipin synthase A (486 aa).

2 helical membrane passes run 3-23 (TVYT…IAGV) and 38-58 (MAWL…YLAV). 2 consecutive PLD phosphodiesterase domains span residues 219–246 (MDLR…VDPR) and 399–426 (EGGL…DMRS). Active-site residues include His-224, Lys-226, Asp-231, His-404, Lys-406, and Asp-411.

This sequence belongs to the phospholipase D family. Cardiolipin synthase subfamily. ClsA sub-subfamily.

The protein resides in the cell inner membrane. The enzyme catalyses 2 a 1,2-diacyl-sn-glycero-3-phospho-(1'-sn-glycerol) = a cardiolipin + glycerol. Functionally, catalyzes the reversible phosphatidyl group transfer from one phosphatidylglycerol molecule to another to form cardiolipin (CL) (diphosphatidylglycerol) and glycerol. The protein is Cardiolipin synthase A of Escherichia coli O157:H7 (strain EC4115 / EHEC).